The chain runs to 575 residues: Thiol:disulfide interchange protein DsbD (575 aa).

Positions 1-24 (MIKRTLMLFLLLCSPLLTPAAANA) are cleaved as a signal peptide. 2 cysteine pairs are disulfide-bonded: Cys126-Cys132 and Cys192-Cys314. A run of 8 helical transmembrane segments spans residues 180-200 (AILI…YPLI), 216-236 (IFWL…LLGL), 253-273 (YVLI…FGLY), 297-317 (LFGV…CTTA), 336-356 (GLTL…VTLF), 367-387 (WMQY…VFLL), 394-414 (AWGI…GFVL), and 425-445 (VIQL…QDWF). The Thioredoxin domain maps to 444–575 (WFWGTTVTQQ…FNEHLQHLPK (132 aa)). Cys490 and Cys493 are joined by a disulfide.

Belongs to the thioredoxin family. DsbD subfamily.

It localises to the cell inner membrane. The enzyme catalyses [protein]-dithiol + NAD(+) = [protein]-disulfide + NADH + H(+). The catalysed reaction is [protein]-dithiol + NADP(+) = [protein]-disulfide + NADPH + H(+). Its function is as follows. Required to facilitate the formation of correct disulfide bonds in some periplasmic proteins and for the assembly of the periplasmic c-type cytochromes. Acts by transferring electrons from cytoplasmic thioredoxin to the periplasm. This transfer involves a cascade of disulfide bond formation and reduction steps. The sequence is that of Thiol:disulfide interchange protein DsbD from Photorhabdus laumondii subsp. laumondii (strain DSM 15139 / CIP 105565 / TT01) (Photorhabdus luminescens subsp. laumondii).